The chain runs to 183 residues: uncharacterized protein (183 aa).

This is an uncharacterized protein from Bacillus subtilis (strain 168).